The chain runs to 369 residues: LIM homeobox transcription factor 1-beta (369 aa).

2 consecutive LIM zinc-binding domains span residues 23–73 (CEGC…CKQD) and 82–135 (CSGC…CKGD). Residues 143-196 (LSSVSPDESDSVKSEDEDGDMKPAKGQGSQSKGGGDDGKDPRRPKRPRTILTTQ) form a disordered region. A DNA-binding region (homeobox) is located at residues 186 to 245 (PKRPRTILTTQQRRAFKASFEVSSKPCRKVRETLAAETGLSVRVVQVWFQNQRAKMKKLA).

As to quaternary structure, interacts with DHX9.

Its subcellular location is the nucleus. In terms of biological role, transcription factor involved in the regulation of podocyte-expressed genes. Essential for the specification of dorsal limb fate at both the zeugopodal and autopodal levels. This is LIM homeobox transcription factor 1-beta (LMX1B) from Mesocricetus auratus (Golden hamster).